Reading from the N-terminus, the 740-residue chain is E3 ubiquitin-protein ligase DTX3L (740 aa).

At A2 the chain carries N-acetylalanine. A Phosphoserine modification is found at S9. 3 disordered regions span residues 96-119 (NTRP…MHQH), 195-231 (SEQK…KAEQ), and 524-551 (HETP…SEAS). Polar residues-rich tracts occupy residues 98-111 (RPQI…QAET) and 195-205 (SEQKQQFSPSM). Residue S202 is modified to Phosphoserine. Basic and acidic residues predominate over residues 206-218 (TERKPLSQQERDS). 3 positions are modified to phosphoserine: S221, S532, and S539. The RING-type zinc finger occupies 561–600 (CVICMDTISNKKVLPKCKHEFCAPCINKAMSYKPICPTCQ).

It belongs to the Deltex family. In terms of assembly, homodimer and heterodimer. Can heterodimerize with DTX1, enhancing its ubiquitin ligase activity in vitro. Interacts (via N-terminus) with ADP ribosyltransferase PARP9/BAL1 (via PARP catalytic domain) forming a stable complex; the interaction is required to activate PARP9 but is dispensable for DTX3L catalytic activity. Forms a complex with STAT1 and PARP9 independently of IFNB1 or IFNG-mediated STAT1 'Tyr-701' phosphorylation. Found in a complex with PARP9, STAT1 and H2BC9. Found in a complex with E3 ligase ITCH and ESCRT-0 components HGS and STAM. Interacts (via C-terminus) with ITCH; the interaction is increased upon CXCL12 stimulation and inhibits ITCH catalytic activity; the interaction is direct. Interacts with HGS and STAM; the interaction brings together HGS and STAM and promotes their recruitment to early endosomes. As to quaternary structure, (Microbial infection) Interacts with encephalomyocarditis virus (EMCV) C3 protease; the interaction results in C3 protease 'Lys-48'-linked ubiquitination. (Microbial infection) Interacts with human rhinovirus (HRV) C3 protease; the interaction results in C3 protease 'Lys-48'-linked ubiquitination. Autoubiquitinated.

Its subcellular location is the cytoplasm. The protein resides in the nucleus. It is found in the early endosome membrane. The protein localises to the lysosome membrane. The enzyme catalyses S-ubiquitinyl-[E2 ubiquitin-conjugating enzyme]-L-cysteine + [acceptor protein]-L-lysine = [E2 ubiquitin-conjugating enzyme]-L-cysteine + N(6)-ubiquitinyl-[acceptor protein]-L-lysine.. It participates in protein modification; protein ubiquitination. Its activity is regulated as follows. Binding to PARP9 enhances DTX3L catalytic activity. Its function is as follows. E3 ubiquitin-protein ligase which, in association with ADP-ribosyltransferase PARP9, plays a role in DNA damage repair and in interferon-mediated antiviral responses. Monoubiquitinates several histones, including histone H2A, H2B, H3 and H4. In response to DNA damage, mediates monoubiquitination of 'Lys-91' of histone H4 (H4K91ub1). The exact role of H4K91ub1 in DNA damage response is still unclear but it may function as a licensing signal for additional histone H4 post-translational modifications such as H4 'Lys-20' methylation (H4K20me). PARP1-dependent PARP9-DTX3L-mediated ubiquitination promotes the rapid and specific recruitment of 53BP1/TP53BP1, UIMC1/RAP80, and BRCA1 to DNA damage sites. By monoubiquitinating histone H2B H2BC9/H2BJ and thereby promoting chromatin remodeling, positively regulates STAT1-dependent interferon-stimulated gene transcription and thus STAT1-mediated control of viral replication. Independently of its catalytic activity, promotes the sorting of chemokine receptor CXCR4 from early endosome to lysosome following CXCL12 stimulation by reducing E3 ligase ITCH activity and thus ITCH-mediated ubiquitination of endosomal sorting complex required for transport ESCRT-0 components HGS and STAM. In addition, required for the recruitment of HGS and STAM to early endosomes. In association with PARP9, plays a role in antiviral responses by mediating 'Lys-48'-linked ubiquitination of encephalomyocarditis virus (EMCV) and human rhinovirus (HRV) C3 proteases and thus promoting their proteasomal-mediated degradation. This Homo sapiens (Human) protein is E3 ubiquitin-protein ligase DTX3L (DTX3L).